A 1976-amino-acid chain; its full sequence is MAQRTGLEDPERYLFVDRAVIYNPATQADWTAKKLVWIPSERHGFEAASIKEERGDEVMVELAENGKKAMVNKDDIQKMNPPKFSKVEDMAELTCLNEASVLHNLKDRYYSGLIYTYSGLFCVVINPYKNLPIYSENIIEMYRGKKRHEKPPHIYAISESAYRCMLQDRKDQSILCTGESGAGKTENTKKVIQYLAHVASSHKGRKDHNIPGELERQLLQANPILESFGNAKTVKNDNSSRFGKFIRINFDVTGYIVGANIETYLLEKSRAVRQAKDERTFHIFYQLLSGAGEHLKSDLLLEGFNNYRFLSNGYIPIPGQQDKDNFQETMEAMHIMGFSHEEILSMLKVVSSVLQFGNISFKKERNTDQASMPENTVAQKLCHLLGMNVMEFTRAILTPRIKVGRDYVQKAQTKEQADFAVEALAKATYERLFRWLVHRINKALDRTKRQGTSFIGILDIAGFEIFELNSFEQLCINYTNEKLQQLFNHTMFILEQEEYQREGIEWNFIDFGLDLQPCIDLIERPANPPGVLALLDEECWFPKATDKTFVEKLVQEQGSHSKFQKPRQLKDKADFCIIHYAGKVDYKADEWLMKNMDPLNDNVATLLHQSSDRFVAELWKDVDRIVGLDQVTGMTETAFGSAYKTKKGMFRNVGQLYKESLTKLMATLRNTNPNFVRCIIPNHEKRAGKLDPHLVLDQLRCNGVLEGIRICRQGFPNRIVFQEFRQRYEILTPNAIPKGFMDGKQACERMIRALELDPNLYRIGQSKIFFRAGVLAHLEEERDLKITDIIIFFQAVCRGYLARKAFAKKQQQLSALKVLQRNCAAYLKLRHWQWWRVFTKVKPLLQVTRQEEELQAKDEELLKVKEKQTKVEGELEEMERKHQQLLEEKNILAEQLQAETELFAEAEEMRARLAAKKQELEEILHDLESRVEGEEERNQILQNEKKKMQAHIQDLEEQLDEEEGARQKLQLEKVTAEAKIKKMEEEVLLLEDQNSKFIKEKKLMEDRIAECSSQLAEEEEKAKNLAKIRNKQEVMISDLEERLKKEEKTRQELEKAKRKLDGETTDLQDQIAELQAQVDELKVQLTKKEEELQGALARGDDETLHKNNALKVARELQAQIAELQEDFESEKASRNKAEKQKRDLSEELEALKTELEDTLDTTAAQQELRTKREQEVAELKKALEDETKNHEAQIQDMRQRHATALEELSEQLEQAKRFKANLEKNKQGLETDNKELACEVKVLQQVKAESEHKRKKLDAQVQELHAKVSEGDRLRVELAEKANKLQNELDNVSTLLEEAEKKGMKFAKDAAGLESQLQDTQELLQEETRQKLNLSSRIRQLEEEKNSLQEQQEEEEEARKNLEKQVLALQSQLADTKKKVDDDLGTIEGLEEAKKKLLKDVEALSQRLEEKVLAYDKLEKTKNRLQQELDDLTVDLDHQRQIVSNLEKKQKKFDQLLAEEKGISARYAEERDRAEAEAREKETKALSLARALEEALEAKEEFERQNKQLRADMEDLMSSKDDVGKNVHELEKSKRALEQQVEEMRTQLEELEDELQATEDAKLRLEVNMQAMKAQFERDLQTRDEQNEEKKRLLLKQVRELEAELEDERKQRALAVASKKKMEIDLKDLEAQIEAANKARDEVIKQLRKLQAQMKDYQRELEEARASRDEIFAQSKESEKKLKSLEAEILQLQEELASSERARRHAEQERDELADEIANSASGKSALLDEKRRLEARIAQLEEELEEEQSNMELLNDRFRKTTLQVDTLNTELAAERSAAQKSDNARQQLERQNKELKAKLQELEGAVKSKFKATISALEAKIGQLEEQLEQEAKERAAANKLVRRTEKKLKEIFMQVEDERRHADQYKEQMEKANARMKQLKRQLEEAEEEATRANASRRKLQRELDDATEANEGLSREVSTLKNRLRRGGPISFSSSRSGRRQLHIEGASLELSDDDTESKTSDVNETQPPQSE.

Arg-18 carries the post-translational modification Omega-N-methylarginine. The 51-residue stretch at 31 to 81 (TAKKLVWIPSERHGFEAASIKEERGDEVMVELAENGKKAMVNKDDIQKMNP) folds into the Myosin N-terminal SH3-like domain. Positions 85 to 783 (SKVEDMAELT…VLAHLEEERD (699 aa)) constitute a Myosin motor domain. 178–185 (GESGAGKT) provides a ligand contact to ATP. An N6-acetyllysine modification is found at Lys-442. Positions 661–683 (LTKLMATLRNTNPNFVRCIIPNH) are actin-binding. Residues 786–815 (ITDIIIFFQAVCRGYLARKAFAKKQQQLSA) enclose the IQ domain. Residues 845 to 1976 (LQVTRQEEEL…VNETQPPQSE (1132 aa)) are a coiled coil. Residues 1125–1175 (EDFESEKASRNKAEKQKRDLSEELEALKTELEDTLDTTAAQQELRTKREQE) form a disordered region. The span at 1129–1155 (SEKASRNKAEKQKRDLSEELEALKTEL) shows a compositional bias: basic and acidic residues. Phosphoserine is present on Ser-1145. N6-acetyllysine is present on residues Lys-1241, Lys-1301, and Lys-1645. Disordered regions lie at residues 1697–1718 (ASSERARRHAEQERDELADEIA) and 1874–1976 (KANA…PQSE). Over residues 1698-1708 (SSERARRHAEQ) the composition is skewed to basic and acidic residues. Position 1930 is an omega-N-methylarginine (Arg-1930). Residues Ser-1935, Ser-1937, Ser-1938, and Ser-1939 each carry the phosphoserine modification. Arg-1940 carries the post-translational modification Omega-N-methylarginine. Phosphoserine is present on residues Ser-1952 and Ser-1956. Thr-1960 carries the phosphothreonine modification. Residues 1967–1976 (VNETQPPQSE) are compositionally biased toward polar residues. Ser-1975 is modified (phosphoserine).

This sequence belongs to the TRAFAC class myosin-kinesin ATPase superfamily. Myosin family. Myosin is a hexameric protein that consists of 2 heavy chain subunits (MHC), 2 alkali light chain subunits (MLC) and 2 regulatory light chain subunits (MLC-2). Interacts with PLEKHG6. Interacts with ECPAS. Interacts with KIF26B. Interacts with LARP6. Interacts with MCC. Interacts with CFAP95. Post-translationally, phosphorylated by ABL2.

It is found in the cell projection. It localises to the lamellipodium. Its function is as follows. Involved with LARP6 in the stabilization of type I collagen mRNAs for CO1A1 and CO1A2. During cell spreading, plays an important role in cytoskeleton reorganization, focal contacts formation (in the central part but not the margins of spreading cells), and lamellipodial extension; this function is mechanically antagonized by MYH9. Cellular myosin that appears to play a role in cytokinesis, cell shape, and specialized functions such as secretion and capping. The chain is Myosin-10 (Myh10) from Rattus norvegicus (Rat).